Consider the following 792-residue polypeptide: Endonuclease MutS2 (792 aa).

334–341 (GPNTGGKT) contributes to the ATP binding site. The Smr domain occupies 717 to 792 (INLIGKTTDE…DAGVTIATFK (76 aa)).

Belongs to the DNA mismatch repair MutS family. MutS2 subfamily. In terms of assembly, homodimer. Binds to stalled ribosomes, contacting rRNA.

Its function is as follows. Endonuclease that is involved in the suppression of homologous recombination and thus may have a key role in the control of bacterial genetic diversity. In terms of biological role, acts as a ribosome collision sensor, splitting the ribosome into its 2 subunits. Detects stalled/collided 70S ribosomes which it binds and splits by an ATP-hydrolysis driven conformational change. Acts upstream of the ribosome quality control system (RQC), a ribosome-associated complex that mediates the extraction of incompletely synthesized nascent chains from stalled ribosomes and their subsequent degradation. Probably generates substrates for RQC. The polypeptide is Endonuclease MutS2 (Agathobacter rectalis (strain ATCC 33656 / DSM 3377 / JCM 17463 / KCTC 5835 / VPI 0990) (Eubacterium rectale)).